A 180-amino-acid polypeptide reads, in one-letter code: MIDLKEVKERMGKVSKAFQNELINIRAGRANPNILNKIQVEYYGAPTPLNQLASVQIPEARVLLITPYDKTSLKAIEQAIFASDLGLTPQNDGSAIRLIIPQLTEDSRKELVKQVKAEAEKAKVAARNTRHDFMSDLKKDNDLSEDSRHRTEDDIQKATDLEIKDIDRIADIKEKELMEI.

The tract at residues 135 to 156 (SDLKKDNDLSEDSRHRTEDDIQ) is disordered.

Belongs to the RRF family.

Its subcellular location is the cytoplasm. Responsible for the release of ribosomes from messenger RNA at the termination of protein biosynthesis. May increase the efficiency of translation by recycling ribosomes from one round of translation to another. The polypeptide is Ribosome-recycling factor (Oenococcus oeni (strain ATCC BAA-331 / PSU-1)).